Here is a 309-residue protein sequence, read N- to C-terminus: Protein FdhE (309 aa).

This sequence belongs to the FdhE family.

The protein resides in the cytoplasm. Necessary for formate dehydrogenase activity. The protein is Protein FdhE of Salmonella enteritidis PT4 (strain P125109).